The sequence spans 347 residues: 4-hydroxy-2-oxovalerate aldolase (347 aa).

The Pyruvate carboxyltransferase domain maps to 2-252 (ILISDATLRD…DTRTTFERVM (251 aa)). 10–11 (RD) contacts substrate. A Mn(2+)-binding site is contributed by Asp-11. His-14 (proton acceptor) is an active-site residue. Ser-164 and His-191 together coordinate substrate. The Mn(2+) site is built by His-191 and His-193.

The protein belongs to the 4-hydroxy-2-oxovalerate aldolase family.

It carries out the reaction (S)-4-hydroxy-2-oxopentanoate = acetaldehyde + pyruvate. The protein is 4-hydroxy-2-oxovalerate aldolase (mhpE) of Burkholderia pseudomallei (strain K96243).